A 419-amino-acid chain; its full sequence is Serine hydroxymethyltransferase (419 aa).

(6S)-5,6,7,8-tetrahydrofolate-binding positions include Leu121 and Gly125 to Leu127. Residue Lys229 is modified to N6-(pyridoxal phosphate)lysine.

Belongs to the SHMT family. As to quaternary structure, homodimer. Pyridoxal 5'-phosphate serves as cofactor.

Its subcellular location is the cytoplasm. It carries out the reaction (6R)-5,10-methylene-5,6,7,8-tetrahydrofolate + glycine + H2O = (6S)-5,6,7,8-tetrahydrofolate + L-serine. It participates in one-carbon metabolism; tetrahydrofolate interconversion. Its pathway is amino-acid biosynthesis; glycine biosynthesis; glycine from L-serine: step 1/1. Its function is as follows. Catalyzes the reversible interconversion of serine and glycine with tetrahydrofolate (THF) serving as the one-carbon carrier. This reaction serves as the major source of one-carbon groups required for the biosynthesis of purines, thymidylate, methionine, and other important biomolecules. Also exhibits THF-independent aldolase activity toward beta-hydroxyamino acids, producing glycine and aldehydes, via a retro-aldol mechanism. This chain is Serine hydroxymethyltransferase, found in Histophilus somni (strain 2336) (Haemophilus somnus).